The following is a 1061-amino-acid chain: Lysine-specific demethylase jmjd-3.1 (1061 aa).

Disordered regions lie at residues 30–49 (VKNS…MRPV) and 256–417 (KSLS…KRRT). Residues 271–287 (QHTNSVGSSIGTTSGDS) are compositionally biased toward polar residues. Residues 310–320 (STSSEFTETTS) are compositionally biased toward low complexity. Residues 321–330 (VANQTESNAG) show a composition bias toward polar residues. The required for nuclear localization stretch occupies residues 369–417 (KKKEQSATEPPIPRTKRAYTKNPNTIRKRRMKKNQSDDEEDDGPPKRRT). The required for binding of unc-3 and for function in Y-to-PDA transdifferentiation stretch occupies residues 418-759 (INYQIEFRDA…FGTNIDLLSE (342 aa)). The JmjC domain occupies 760-923 (NFKKQMNEIE…LATSIVAHDH (164 aa)). Fe cation is bound by residues His-811, Glu-813, and His-891. Positions 998, 1001, 1025, and 1028 each coordinate Zn(2+).

It belongs to the UTX family. As to quaternary structure, interacts with wdr-5.1 and unc-3. Fe(2+) is required as a cofactor. Mainly expressed in head and tail.

It localises to the nucleus. In terms of biological role, histone demethylase that specifically demethylates trimethylated 'Lys-27' of histone H3, a mark associated with transcriptional repression, thereby playing a central role in the histone code. Involved in the transcriptional regulation of the heat shock response, unfolded protein response and possibly other stress response target genes. Required for gonad development and organization. Required for the robust transdifferentiation of the Y rectal epithelial cell to the PDA motor neuron during larval development. Acts cell-autonomously in Y-to-PDA transdifferentiation, which depends on the demethylase activity and on recognition of the H3 tail. Cooperates with set-2 and unc-3 to ensure robust Y-to-PDA transdifferentiation. Promotes mitochondrial stress-induced longevity. Involved in lifespan regulation. The chain is Lysine-specific demethylase jmjd-3.1 from Caenorhabditis elegans.